The sequence spans 776 residues: Probable E3 ubiquitin-protein ligase HECTD2 (776 aa).

The segment at 1-46 (MSEAVRVPSPATPLVVAAPAPEERKGKESEREKLPPIVSAGAGATA) is disordered. The segment covering 7-20 (VPSPATPLVVAAPA) has biased composition (low complexity). At serine 9 the chain carries Phosphoserine. Residues 21 to 34 (PEERKGKESEREKL) show a composition bias toward basic and acidic residues. The 340-residue stretch at 437 to 776 (KRADLKKKLK…ISNSEGFGLE (340 aa)) folds into the HECT domain. Cysteine 744 acts as the Glycyl thioester intermediate in catalysis.

The enzyme catalyses S-ubiquitinyl-[E2 ubiquitin-conjugating enzyme]-L-cysteine + [acceptor protein]-L-lysine = [E2 ubiquitin-conjugating enzyme]-L-cysteine + N(6)-ubiquitinyl-[acceptor protein]-L-lysine.. The protein operates within protein modification; protein ubiquitination. Its function is as follows. E3 ubiquitin-protein ligase which accepts ubiquitin from an E2 ubiquitin-conjugating enzyme in the form of a thioester and then directly transfers the ubiquitin to targeted substrates. (Microbial infection) Catalyzes ubiquitination of Botulinum neurotoxin A light chain (LC) of C.botulinum neurotoxin type A (BoNT/A). In Homo sapiens (Human), this protein is Probable E3 ubiquitin-protein ligase HECTD2.